A 394-amino-acid chain; its full sequence is Chorismate synthase (394 aa).

2 residues coordinate NADP(+): R42 and R48. FMN is bound by residues 137–139 (RAS), 258–259 (QA), G302, 317–321 (KPIAT), and R343.

Belongs to the chorismate synthase family. Homotetramer. The cofactor is FMNH2.

The catalysed reaction is 5-O-(1-carboxyvinyl)-3-phosphoshikimate = chorismate + phosphate. Its pathway is metabolic intermediate biosynthesis; chorismate biosynthesis; chorismate from D-erythrose 4-phosphate and phosphoenolpyruvate: step 7/7. In terms of biological role, catalyzes the anti-1,4-elimination of the C-3 phosphate and the C-6 proR hydrogen from 5-enolpyruvylshikimate-3-phosphate (EPSP) to yield chorismate, which is the branch point compound that serves as the starting substrate for the three terminal pathways of aromatic amino acid biosynthesis. This reaction introduces a second double bond into the aromatic ring system. In Streptomyces coelicolor (strain ATCC BAA-471 / A3(2) / M145), this protein is Chorismate synthase.